A 232-amino-acid polypeptide reads, in one-letter code: Probable ADP-ribosylation factor GTPase-activating protein AGD15 (232 aa).

Positions 16–130 constitute an Arf-GAP domain; it reads SKILEALLKH…RWVSPGAIQP (115 aa). A C4-type zinc finger spans residues 31-54; the sequence is CADCRSKAPRWASVNLGIFICMQC. The disordered stretch occupies residues 203-232; sequence PNQKNENFSSEVNQNRRTTIAPPSSWATFD. The span at 206–232 shows a compositional bias: polar residues; the sequence is KNENFSSEVNQNRRTTIAPPSSWATFD.

Its function is as follows. GTPase-activating protein (GAP) for ADP ribosylation factor (ARF). This Arabidopsis thaliana (Mouse-ear cress) protein is Probable ADP-ribosylation factor GTPase-activating protein AGD15 (AGD15).